Consider the following 281-residue polypeptide: Type VI secretion system accessory component TagJ (281 aa).

In terms of assembly, interacts with TssB1 (via N-terminus). Interacts with ClpV1.

Component of the H1 type VI (H1-T6SS) secretion system that plays a role in the release of toxins targeting both eukaryotic and prokaryotic species. Forms a stable complex with TssB1. This complex, although not crucial for the H1-T6SS function, may fine-tune the assembly of the system. Plays a role in the interaction between ClpV1 and the TssC1/TssB1 sheath. The sequence is that of Type VI secretion system accessory component TagJ from Pseudomonas aeruginosa (strain ATCC 15692 / DSM 22644 / CIP 104116 / JCM 14847 / LMG 12228 / 1C / PRS 101 / PAO1).